Reading from the N-terminus, the 375-residue chain is Protein kinase MCK1 (375 aa).

S2 is subject to N-acetylserine. One can recognise a Protein kinase domain in the interval 35–327 (VKEYRKIGRG…PRRILAHQFF (293 aa)). ATP is bound by residues 41–49 (IGRGAFGTV) and K68. Catalysis depends on D164, which acts as the Proton acceptor. At S198 the chain carries Phosphoserine. At Y199 the chain carries Phosphotyrosine. S202 carries the phosphoserine modification.

This sequence belongs to the protein kinase superfamily. Ser/Thr protein kinase family. In terms of processing, phosphorylated at tyrosine and serine.

The enzyme catalyses L-seryl-[protein] + ATP = O-phospho-L-seryl-[protein] + ADP + H(+). The catalysed reaction is L-threonyl-[protein] + ATP = O-phospho-L-threonyl-[protein] + ADP + H(+). It carries out the reaction L-tyrosyl-[protein] + ATP = O-phospho-L-tyrosyl-[protein] + ADP + H(+). Functionally, may be an autophosphorylating tyrosine kinase, a bifunctional (serine/tyrosine-specific) protein kinase, or a serine kinase that is a substrate for an associated tyrosine kinase. MCK1 is a transcriptional activator of IME1, it stimulates spore maturation, and play a positive regulatory role in both mitotic centromere function and activation of early meiotic gene expression. This Saccharomyces cerevisiae (strain ATCC 204508 / S288c) (Baker's yeast) protein is Protein kinase MCK1 (MCK1).